Reading from the N-terminus, the 1318-residue chain is DNA-directed RNA polymerase subunit beta' (1318 aa).

Zn(2+)-binding residues include Cys221, Cys295, Cys302, and Cys305.

Belongs to the RNA polymerase beta' chain family. RpoC2 subfamily. As to quaternary structure, in cyanobacteria the RNAP catalytic core is composed of 2 alpha, 1 beta, 1 beta', 1 gamma and 1 omega subunit. When a sigma factor is associated with the core the holoenzyme is formed, which can initiate transcription. Requires Zn(2+) as cofactor.

The enzyme catalyses RNA(n) + a ribonucleoside 5'-triphosphate = RNA(n+1) + diphosphate. DNA-dependent RNA polymerase catalyzes the transcription of DNA into RNA using the four ribonucleoside triphosphates as substrates. This is DNA-directed RNA polymerase subunit beta' from Synechococcus elongatus (strain ATCC 33912 / PCC 7942 / FACHB-805) (Anacystis nidulans R2).